The primary structure comprises 47 residues: Large ribosomal subunit protein bL34 (47 aa).

Belongs to the bacterial ribosomal protein bL34 family.

In Corynebacterium jeikeium (strain K411), this protein is Large ribosomal subunit protein bL34.